Reading from the N-terminus, the 275-residue chain is 2,3,4,5-tetrahydropyridine-2,6-dicarboxylate N-succinyltransferase (275 aa).

Arg106 and Asp143 together coordinate substrate.

The protein belongs to the transferase hexapeptide repeat family. Homotrimer.

It is found in the cytoplasm. The enzyme catalyses (S)-2,3,4,5-tetrahydrodipicolinate + succinyl-CoA + H2O = (S)-2-succinylamino-6-oxoheptanedioate + CoA. Its pathway is amino-acid biosynthesis; L-lysine biosynthesis via DAP pathway; LL-2,6-diaminopimelate from (S)-tetrahydrodipicolinate (succinylase route): step 1/3. The sequence is that of 2,3,4,5-tetrahydropyridine-2,6-dicarboxylate N-succinyltransferase from Paraburkholderia xenovorans (strain LB400).